We begin with the raw amino-acid sequence, 387 residues long: MSEDFYDVLGVSRNADGDDIKQAYRKKAAKYHPDVSDDPNAEEKFKKIKKAKEVLTDGEKRQMYDQLGHDRFQQAEKRGGVGGGGNSSGGSARGDPFGGMGGQGSPFGDIFEQFFGGGQGQRRQGNRPRQGQNLQTRVQLDLEEVYTGVEKQFTVRRPEKCPDCNGRGHPSDADVRTCPQCNGQGQTTTVRETALGRVQQTQTCPRCDGSGEMYTQTCSTCNGDGVTRQEATLSVDIPAGIRDGQTLRMEREGAPGDNGGPRGDLLIDVSVRDHPDFERDGDDLYYRLAISFPQAVFGSTVEVPTVNGETTLDISAGTQSGEEFRIRNEGIPHLRGRGTGDLYVQVQIVTPENLSQKQREALEAFAEAGGESVDVSQGFFEKIKSSF.

A J domain is found at 4-68; sequence DFYDVLGVSR…EKRQMYDQLG (65 aa). The tract at residues 76–135 is disordered; the sequence is EKRGGVGGGGNSSGGSARGDPFGGMGGQGSPFGDIFEQFFGGGQGQRRQGNRPRQGQNLQ. The segment covering 80–105 has biased composition (gly residues); that stretch reads GVGGGGNSSGGSARGDPFGGMGGQGS. Positions 121-133 are enriched in low complexity; that stretch reads QRRQGNRPRQGQN. The CR-type zinc finger occupies 148-230; sequence GVEKQFTVRR…CNGDGVTRQE (83 aa). The Zn(2+) site is built by C161, C164, C178, C181, C204, C207, C218, and C221. 4 CXXCXGXG motif repeats span residues 161–168, 178–185, 204–211, and 218–225; these read CPDCNGRG, CPQCNGQG, CPRCDGSG, and CSTCNGDG.

The protein belongs to the DnaJ family. As to quaternary structure, homodimer. The cofactor is Zn(2+).

It is found in the cytoplasm. Functionally, participates actively in the response to hyperosmotic and heat shock by preventing the aggregation of stress-denatured proteins and by disaggregating proteins, also in an autonomous, DnaK-independent fashion. Unfolded proteins bind initially to DnaJ; upon interaction with the DnaJ-bound protein, DnaK hydrolyzes its bound ATP, resulting in the formation of a stable complex. GrpE releases ADP from DnaK; ATP binding to DnaK triggers the release of the substrate protein, thus completing the reaction cycle. Several rounds of ATP-dependent interactions between DnaJ, DnaK and GrpE are required for fully efficient folding. Also involved, together with DnaK and GrpE, in the DNA replication of plasmids through activation of initiation proteins. In Haloquadratum walsbyi (strain DSM 16790 / HBSQ001), this protein is Chaperone protein DnaJ.